The sequence spans 135 residues: Adult cuticle protein 1 (135 aa).

The signal sequence occupies residues 1–19; the sequence is MKFAVAVIFTLALAMGVQS. Tandem repeats lie at residues 72-75, 78-81, and 128-131.

Detected in the epidermis underlying the head and thorax (including legs and wings), but not in the abdominal epidermis of newly eclosed flies.

Functionally, component of the cuticle of the adult fruit fly. Could be involved in thickening of the hard adult cuticle. The polypeptide is Adult cuticle protein 1 (Acp1) (Drosophila melanogaster (Fruit fly)).